Here is a 303-residue protein sequence, read N- to C-terminus: Ribosomal protein L11 methyltransferase (303 aa).

T144, G165, D187, and N235 together coordinate S-adenosyl-L-methionine.

This sequence belongs to the methyltransferase superfamily. PrmA family.

Its subcellular location is the cytoplasm. It catalyses the reaction L-lysyl-[protein] + 3 S-adenosyl-L-methionine = N(6),N(6),N(6)-trimethyl-L-lysyl-[protein] + 3 S-adenosyl-L-homocysteine + 3 H(+). Functionally, methylates ribosomal protein L11. The protein is Ribosomal protein L11 methyltransferase of Prochlorococcus marinus (strain MIT 9312).